A 321-amino-acid chain; its full sequence is Putative ribose-phosphate pyrophosphokinase 2 (321 aa).

Residues 43-45 (DGE) and 102-103 (RQ) contribute to the ATP site. Mg(2+) is bound by residues His136 and Asp176. Asp225 contributes to the D-ribose 5-phosphate binding site.

It belongs to the ribose-phosphate pyrophosphokinase family. Class I subfamily. As to quaternary structure, homohexamer. The cofactor is Mg(2+).

It is found in the cytoplasm. It catalyses the reaction D-ribose 5-phosphate + ATP = 5-phospho-alpha-D-ribose 1-diphosphate + AMP + H(+). Its pathway is metabolic intermediate biosynthesis; 5-phospho-alpha-D-ribose 1-diphosphate biosynthesis; 5-phospho-alpha-D-ribose 1-diphosphate from D-ribose 5-phosphate (route I): step 1/1. In terms of biological role, involved in the biosynthesis of the central metabolite phospho-alpha-D-ribosyl-1-pyrophosphate (PRPP) via the transfer of pyrophosphoryl group from ATP to 1-hydroxyl of ribose-5-phosphate (Rib-5-P). The polypeptide is Putative ribose-phosphate pyrophosphokinase 2 (Lactiplantibacillus plantarum (strain ATCC BAA-793 / NCIMB 8826 / WCFS1) (Lactobacillus plantarum)).